Here is a 680-residue protein sequence, read N- to C-terminus: ABC transporter B family member 24, mitochondrial (680 aa).

The N-terminal 75 residues, 1 to 75, are a transit peptide targeting the mitochondrion; sequence MMRVSQLQLC…MFFSTSTSAP (75 aa). The 295-residue stretch at 108-402 folds into the ABC transmembrane type-1 domain; it reads VISAFACLVG…LGVVYSDTVQ (295 aa). The next 6 membrane-spanning stretches (helical) occupy residues 109 to 129, 145 to 165, 232 to 252, 255 to 275, 340 to 360, and 376 to 396; these read ISAF…PFLF, NPYL…YGIA, AMVF…CILA, FGAV…AFTL, FALL…TAMV, and LVMV…LGVV. Positions 439–673 constitute an ABC transporter domain; the sequence is ISFENVHFSY…SGRYAKLWTQ (235 aa). Residues Tyr-448 and 472-483 contribute to the ATP site; that span reads GSSGSGKSTILR.

Belongs to the ABC transporter superfamily. ABCB family. Heavy Metal importer (TC 3.A.1.210) subfamily. Homodimer. In terms of tissue distribution, mostly expressed at low levels in roots and flowers.

It localises to the mitochondrion inner membrane. Functionally, performs an essential function in the generation of cytoplasmic iron-sulfur proteins by mediating export of Fe/S cluster precursors synthesized by NFS1 and other mitochondrial proteins. Not involved in the export of cyclic pyranopterin monophosphate (cPMP) from mitochondria to the cytosol. This chain is ABC transporter B family member 24, mitochondrial (ABCB24), found in Arabidopsis thaliana (Mouse-ear cress).